A 119-amino-acid chain; its full sequence is Beta-2-microglobulin (119 aa).

A signal peptide spans 1 to 20 (MAPFVAIALLVLLSLSGLEA). Positions 25 to 114 (PKIQVYSRHP…VTFSTPKTVK (90 aa)) constitute an Ig-like C1-type domain. A disulfide bridge links cysteine 45 with cysteine 100.

Belongs to the beta-2-microglobulin family. Heterodimer of an alpha chain and a beta chain. Beta-2-microglobulin is the beta-chain of major histocompatibility complex class I molecules.

The protein resides in the secreted. Functionally, component of the class I major histocompatibility complex (MHC). Involved in the presentation of peptide antigens to the immune system. This Cheracebus torquatus (Collared titi monkey) protein is Beta-2-microglobulin (B2M).